Reading from the N-terminus, the 306-residue chain is MERDSNTAKSEIFYSNPAIWRHLKDGKGEGMSKSEKRNKHGCRNFTYSIWNCIRPGGWSTWSKWSKCREGIRKRRRTCNNPLPIGTTCSGQKVEKQSCAISSNVPEYLFGSWTSWNPWSRCDCDRSLRIRTRHCKGNSCEGCDKDYEDCRPDECPISKKWSEWTDWVNYGIEQVRFSAWCSSSNVANTEVGIRKETQDSMKHANWSEWHMHPGVAYRYRLLHNSSISIEHHLLSRFTSSCLPLHFAIPIFCFCILTGFLLQNIIYCVVNRFKRRFIRLNYSYDSNPRDYPSHLIRSPGSPKDESFW.

2 consecutive TSP type-1 domains span residues 55-102 (PGGW…AISS) and 109-155 (FGSW…DECP). 2 C-linked (Man) tryptophan glycosylation sites follow: Trp-58 and Trp-61. Cystine bridges form between Cys-121/Cys-149, Cys-123/Cys-154, and Cys-134/Cys-139. A helical membrane pass occupies residues 240 to 260 (CLPLHFAIPIFCFCILTGFLL).

Glycosylated via C-mannosylation by dpy-19 at Trp-58 and Trp-61.

The protein resides in the membrane. Its function is as follows. Required for determination of left/right asymmetry in nervous system. Acts together with unc-40 to control an initial left-right asymmetric polarization of the Q neuroblasts. Mig-21 and unc-40 may control the asymmetry in Wnt signaling response by restricting posterior polarization to one of the 2 Q neuroblasts. Involved in left-side QL posterior migration. In right-side QR, unc-40 and mig-21 pathways mutually inhibit each other in posterior migration, allowing anterior QR migration. The chain is Abnormal cell migration protein 21 (mig-21) from Caenorhabditis elegans.